A 409-amino-acid polypeptide reads, in one-letter code: Tyrosine--tRNA ligase (409 aa).

Position 39 (Tyr39) interacts with L-tyrosine. Residues 44–53 (PTAASLHVGS) carry the 'HIGH' region motif. Residues Tyr176 and Gln180 each contribute to the L-tyrosine site. The 'KMSKS' region signature appears at 236 to 240 (KMGKT). Residue Lys239 participates in ATP binding. The S4 RNA-binding domain occupies 346–408 (ISLVDALVGL…GKKAHGVIQA (63 aa)).

The protein belongs to the class-I aminoacyl-tRNA synthetase family. TyrS type 1 subfamily. As to quaternary structure, homodimer.

Its subcellular location is the cytoplasm. The catalysed reaction is tRNA(Tyr) + L-tyrosine + ATP = L-tyrosyl-tRNA(Tyr) + AMP + diphosphate + H(+). Functionally, catalyzes the attachment of tyrosine to tRNA(Tyr) in a two-step reaction: tyrosine is first activated by ATP to form Tyr-AMP and then transferred to the acceptor end of tRNA(Tyr). The sequence is that of Tyrosine--tRNA ligase from Zymomonas mobilis subsp. mobilis (strain ATCC 31821 / ZM4 / CP4).